A 484-amino-acid chain; its full sequence is 1,4-beta-D-glucan cellobiohydrolase CEL6A (484 aa).

A signal peptide spans 1 to 17 (MAKRLLLTAALAATTLA). Residues 26–62 (NCGSVWSQCGGQGWTGATCCASGSTCVAQNQWYSQCL) enclose the CBM1 domain. Disulfide bonds link cysteine 34-cysteine 51 and cysteine 45-cysteine 61. The disordered stretch occupies residues 68–98 (TTTAQAPSSTRTTTSSSSRPTSSSISTSAVN). Residues tryptophan 171 and aspartate 173 each coordinate substrate. Asparagine 175 is a glycosylation site (N-linked (GlcNAc...) asparagine). The segment at 208–230 (YDLPDRDCAAAASNGEWAIADGG) is substrate binding loop 1. Residue aspartate 260 is the Proton donor of the active site. The substrate site is built by histidine 305, tryptophan 308, asparagine 344, tryptophan 405, lysine 433, and glutamate 437. The substrate binding loop 2 stretch occupies residues 431–469 (WIKPGGECDGTSDTTAARYDHHCGFADALKPAPEAGQWF). The active-site Proton acceptor is the aspartate 439.

It belongs to the glycosyl hydrolase 6 (cellulase B) family. As to quaternary structure, monomer. In terms of processing, both N- and O-glycosylated.

It localises to the secreted. The enzyme catalyses Hydrolysis of (1-&gt;4)-beta-D-glucosidic linkages in cellulose and cellotetraose, releasing cellobiose from the non-reducing ends of the chains.. Its function is as follows. Exoglucanase that plays an important function in biomass degradation by catalyzing the hydrolysis of the non-reducing end beta-1,4-glucosidic linkages in cellulose and cellotetraose to release cellobiose. Hydrolyzes crystalline and amorphous cellulose but is inactive on hydroxyethyl cellulose, mannan, galactomannan, xyloglucan, arabinoxylan, arabinan, xylan, and pectin. This chain is 1,4-beta-D-glucan cellobiohydrolase CEL6A, found in Podospora anserina (strain S / ATCC MYA-4624 / DSM 980 / FGSC 10383) (Pleurage anserina).